Consider the following 373-residue polypeptide: S-adenosylmethionine:tRNA ribosyltransferase-isomerase (373 aa).

This sequence belongs to the QueA family. In terms of assembly, monomer.

It is found in the cytoplasm. The enzyme catalyses 7-aminomethyl-7-carbaguanosine(34) in tRNA + S-adenosyl-L-methionine = epoxyqueuosine(34) in tRNA + adenine + L-methionine + 2 H(+). It participates in tRNA modification; tRNA-queuosine biosynthesis. Its function is as follows. Transfers and isomerizes the ribose moiety from AdoMet to the 7-aminomethyl group of 7-deazaguanine (preQ1-tRNA) to give epoxyqueuosine (oQ-tRNA). This Prochlorococcus marinus (strain MIT 9515) protein is S-adenosylmethionine:tRNA ribosyltransferase-isomerase.